A 132-amino-acid chain; its full sequence is uncharacterized protein (132 aa).

The next 4 helical transmembrane spans lie at Leu-7–Phe-29, Val-44–Leu-62, Leu-69–Val-88, and Gly-108–Phe-130.

The protein resides in the cell membrane. This is an uncharacterized protein from Aquifex aeolicus (strain VF5).